The sequence spans 598 residues: Autophagy-related protein 22-1 (598 aa).

The tract at residues 1–20 is disordered; sequence MEDGGAGLRAPRYPAEDTSP. A helical membrane pass occupies residues 28–48; the sequence is GFFCYGLAAEVFAVCAVGSFL. Residues N74 and N80 are each glycosylated (N-linked (GlcNAc...) asparagine). A run of 3 helical transmembrane segments spans residues 111–131, 159–179, and 182–202; these read SFAM…LVSV, FLLV…ICVV, and GCSF…HPVV. The interval 207–238 is disordered; sequence DHPTASSSIPLQPISPQRSSRKSEESLHQVNR. Over residues 212–224 the composition is skewed to low complexity; that stretch reads SSSIPLQPISPQR. The span at 227 to 238 shows a compositional bias: basic and acidic residues; the sequence is RKSEESLHQVNR. A helical membrane pass occupies residues 263–283; sequence VGIGYMAAVSVQVICILILYI. N-linked (GlcNAc...) asparagine glycosylation is present at N285. A run of 7 helical transmembrane segments spans residues 297-317, 363-383, 400-420, 431-451, 465-485, 489-509, and 534-554; these read TVLF…VMWL, VLLF…ISAT, ALLS…WPII, IIVC…LGFL, WYEI…LSSY, FYGL…FAIT, and AFGF…MVDV. Residues 575–598 form a disordered region; the sequence is HEDFESFEGSSDGHEAEGLMRDHD. The span at 585 to 598 shows a compositional bias: basic and acidic residues; that stretch reads SDGHEAEGLMRDHD.

Belongs to the ATG22 family.

It localises to the vacuole membrane. In terms of biological role, vacuolar effluxer which mediate the efflux of amino acids resulting from autophagic degradation. The release of autophagic amino acids allows the maintenance of protein synthesis and viability during nitrogen starvation. The sequence is that of Autophagy-related protein 22-1 (atg22-1) from Sclerotinia sclerotiorum (strain ATCC 18683 / 1980 / Ss-1) (White mold).